The sequence spans 325 residues: GMP reductase (325 aa).

The active-site Thioimidate intermediate is C174. 203 to 226 (IVADGGIRNNGDIAKSIRFGASMC) lines the NADP(+) pocket.

Belongs to the IMPDH/GMPR family. GuaC type 2 subfamily.

The enzyme catalyses IMP + NH4(+) + NADP(+) = GMP + NADPH + 2 H(+). Its function is as follows. Catalyzes the irreversible NADPH-dependent deamination of GMP to IMP. It functions in the conversion of nucleobase, nucleoside and nucleotide derivatives of G to A nucleotides, and in maintaining the intracellular balance of A and G nucleotides. The sequence is that of GMP reductase from Ligilactobacillus salivarius (strain UCC118) (Lactobacillus salivarius).